Reading from the N-terminus, the 641-residue chain is Single-strand DNA endonuclease 1 (641 aa).

Positions 1–90 (MGVKNLWDIL…SLKLATYRRR (90 aa)) are N-domain. An XPG-N domain region spans residues 2–97 (GVKNLWDILE…RRRLGSISHA (96 aa)). Residues aspartate 30, aspartate 76, glutamate 144, glutamate 146, aspartate 165, aspartate 167, and aspartate 217 each coordinate Mg(2+). The interval 132–217 (MALGIPCLDG…ISLAVLLGSD (86 aa)) is XPG-I domain. 2 I-domain regions span residues 132–220 (MALG…DYSN) and 132–221 (MALG…YSNG). Residues 217–350 (DYSNGVNGFG…ILPKIAEREL (134 aa)) are 5'-3' exonuclease domain. 2 disordered regions span residues 428–448 (KGEE…QAAV) and 572–615 (VGSH…RVHH). Positions 580–590 (DGGGGGGGGVA) are enriched in gly residues.

Belongs to the XPG/RAD2 endonuclease family. GEN subfamily. Mg(2+) serves as cofactor. As to expression, highly expressed in shoot apical meristem (SAM) and young leaves. Expressed in roots, flag leaf and panicles.

The protein resides in the nucleus. In terms of biological role, single-stranded DNA endonuclease activity in vitro. May not be active as double-stranded DNA endonuclease. Endonuclease which cleaves flap structures at the junction between single-stranded DNA and double-stranded DNA with a specific cleavage site in the 5' overhang strand exactly one nucleotide 3' of the branch point. Structure- and sequence-specific nuclease that resolves holliday junctions (HJs) by symmetrically oriented incisions in two opposing strands near the junction point, thus leading to ligatable products; HJs are physical links between homologous DNA molecules that arise as central intermediary structures during homologous recombination and repair in meiotic and somatic cells. Probably involved in the resolution of toxic replication structures to ensure genome stability, and to maintain telomere integrity and replication. In Oryza sativa subsp. japonica (Rice), this protein is Single-strand DNA endonuclease 1.